The primary structure comprises 167 residues: Disulfide bond formation protein B (167 aa).

At 1-12 the chain is on the cytoplasmic side; sequence MFLNLLDAPRRL. A helical transmembrane segment spans residues 13-29; sequence LALVALGCVALLAFGLY. Over 30–47 the chain is Periplasmic; that stretch reads LQHVVGLEPCPMCIVQRY. C39 and C42 are joined by a disulfide. The helical transmembrane segment at 48–63 threads the bilayer; the sequence is ALVLVAIVAGLTAITS. Over 64-69 the chain is Cytoplasmic; sequence NKKGLI. Residues 70–87 form a helical membrane-spanning segment; it reads TGSGVLLLLAGFGAFVAA. At 88 to 143 the chain is on the periplasmic side; it reads RQSFLQWYPPEVASCGRDFYGMIETFPLQRAIPMIFKGSGDCAKVDWTFLGGSIAN. Residues C102 and C129 are joined by a disulfide bond. Residues 144–162 form a helical membrane-spanning segment; it reads WSFVCFAVIGLTALTLIAR. Residues 163-167 lie on the Cytoplasmic side of the membrane; that stretch reads LARQR.

It belongs to the DsbB family.

It localises to the cell inner membrane. In terms of biological role, required for disulfide bond formation in some periplasmic proteins. Acts by oxidizing the DsbA protein. This Polaromonas naphthalenivorans (strain CJ2) protein is Disulfide bond formation protein B.